A 205-amino-acid polypeptide reads, in one-letter code: Proteasome subunit beta type-3 (205 aa).

It belongs to the peptidase T1B family. As to quaternary structure, the 26S proteasome consists of a 20S proteasome core and two 19S regulatory subunits. The 20S proteasome core is composed of 28 subunits that are arranged in four stacked rings, resulting in a barrel-shaped structure. The two end rings are each formed by seven alpha subunits, and the two central rings are each formed by seven beta subunits. The catalytic chamber with the active sites is on the inside of the barrel.

Its subcellular location is the cytoplasm. It is found in the nucleus. Functionally, non-catalytic component of the proteasome, a multicatalytic proteinase complex which is characterized by its ability to cleave peptides with Arg, Phe, Tyr, Leu, and Glu adjacent to the leaving group at neutral or slightly basic pH. The proteasome has an ATP-dependent proteolytic activity. The chain is Proteasome subunit beta type-3 (psmb3) from Oncorhynchus mykiss (Rainbow trout).